The chain runs to 1305 residues: Cyclin-G-associated kinase (1305 aa).

An N-acetylserine modification is found at S2. S2 and S16 each carry phosphoserine. The region spanning 40–315 is the Protein kinase domain; sequence LRVRRVLAEG…IAEVVRQLQE (276 aa). D173 serves as the catalytic Proton acceptor. The tract at residues 332-354 is disordered; the sequence is LEQNGGYGNSGPSRAQPPSGGPV. One can recognise a Phosphatase tensin-type domain in the interval 397–564; that stretch reads SVANYAKGDL…EYVCDMVAEE (168 aa). S454 carries the post-translational modification Phosphoserine. Residues 570–708 enclose the C2 tensin-type domain; it reads SKPMLVKSVV…FQVNLEVEVE (139 aa). The interval 747–856 is disordered; it reads FGKPELPRQP…TPRLAAGTRQ (110 aa). Residue S768 is modified to Phosphoserine. Residue T774 is modified to Phosphothreonine. Over residues 776–789 the composition is skewed to polar residues; the sequence is SDSPQSSSTDTNHF. Residue S781 is modified to Phosphoserine. T792 bears the Phosphothreonine mark. The span at 805 to 817 shows a compositional bias: polar residues; it reads VDNTSPKESQSNL. Phosphoserine occurs at positions 809, 824, and 827. Over residues 822-832 the composition is skewed to acidic residues; that stretch reads DGSEVSDEEEA. The segment covering 836–848 has biased composition (basic and acidic residues); that stretch reads SEERKPGAGEDTP. S938 is subject to Phosphoserine. The segment at 1044-1141 is disordered; sequence LPGPASMPVP…PQAKPAPRAS (98 aa). The span at 1105–1131 shows a compositional bias: polar residues; it reads VGTSATTHKSNSSWQTTRPTAPGTSWP. At R1122 the chain carries Omega-N-methylarginine. S1171 carries the post-translational modification Phosphoserine. Residues 1241 to 1305 form the J domain; sequence SRWTPVSMAD…FENQGSRPLF (65 aa).

This sequence belongs to the protein kinase superfamily. Ser/Thr protein kinase family.

It is found in the cytoplasm. The protein localises to the perinuclear region. It localises to the golgi apparatus. Its subcellular location is the trans-Golgi network. The protein resides in the cell junction. It is found in the focal adhesion. The protein localises to the cytoplasmic vesicle. It localises to the clathrin-coated vesicle. It carries out the reaction L-seryl-[protein] + ATP = O-phospho-L-seryl-[protein] + ADP + H(+). The enzyme catalyses L-threonyl-[protein] + ATP = O-phospho-L-threonyl-[protein] + ADP + H(+). Functionally, associates with cyclin G and CDK5. Seems to act as an auxilin homolog that is involved in the uncoating of clathrin-coated vesicles by Hsc70 in non-neuronal cells. Expression oscillates slightly during the cell cycle, peaking at G1. May play a role in clathrin-mediated endocytosis and intracellular trafficking, and in the dynamics of clathrin assembly/disassembly. The chain is Cyclin-G-associated kinase from Rattus norvegicus (Rat).